The primary structure comprises 251 residues: Ubiquinone/menaquinone biosynthesis C-methyltransferase UbiE (251 aa).

S-adenosyl-L-methionine is bound by residues Thr-74, Asp-95, and 123-124 (NA).

It belongs to the class I-like SAM-binding methyltransferase superfamily. MenG/UbiE family.

It catalyses the reaction a 2-demethylmenaquinol + S-adenosyl-L-methionine = a menaquinol + S-adenosyl-L-homocysteine + H(+). The catalysed reaction is a 2-methoxy-6-(all-trans-polyprenyl)benzene-1,4-diol + S-adenosyl-L-methionine = a 5-methoxy-2-methyl-3-(all-trans-polyprenyl)benzene-1,4-diol + S-adenosyl-L-homocysteine + H(+). It participates in quinol/quinone metabolism; menaquinone biosynthesis; menaquinol from 1,4-dihydroxy-2-naphthoate: step 2/2. Its pathway is cofactor biosynthesis; ubiquinone biosynthesis. Its function is as follows. Methyltransferase required for the conversion of demethylmenaquinol (DMKH2) to menaquinol (MKH2) and the conversion of 2-polyprenyl-6-methoxy-1,4-benzoquinol (DDMQH2) to 2-polyprenyl-3-methyl-6-methoxy-1,4-benzoquinol (DMQH2). This is Ubiquinone/menaquinone biosynthesis C-methyltransferase UbiE from Psychromonas ingrahamii (strain DSM 17664 / CCUG 51855 / 37).